Reading from the N-terminus, the 262-residue chain is Putative glycyl-radical enzyme activating enzyme HI_0520 (262 aa).

Residues 20 to 262 (VEGQGNRSSI…CGINKILTIL (243 aa)) enclose the Radical SAM core domain. Residues C34, C38, and C41 each coordinate [4Fe-4S] cluster. Residues 40–42 (YCH), G81, and 130–132 (DLK) contribute to the S-adenosyl-L-methionine site.

This sequence belongs to the organic radical-activating enzymes family. Requires [4Fe-4S] cluster as cofactor.

It catalyses the reaction glycyl-[protein] + reduced [flavodoxin] + S-adenosyl-L-methionine = glycin-2-yl radical-[protein] + semiquinone [flavodoxin] + 5'-deoxyadenosine + L-methionine + H(+). In Haemophilus influenzae (strain ATCC 51907 / DSM 11121 / KW20 / Rd), this protein is Putative glycyl-radical enzyme activating enzyme HI_0520.